Here is a 300-residue protein sequence, read N- to C-terminus: Acetaldehyde dehydrogenase (300 aa).

11 to 14 is a binding site for NAD(+); the sequence is SGNI. C129 functions as the Acyl-thioester intermediate in the catalytic mechanism. Residues 160–168 and N271 each bind NAD(+); that span reads SVGPGTRQN.

It belongs to the acetaldehyde dehydrogenase family.

It carries out the reaction acetaldehyde + NAD(+) + CoA = acetyl-CoA + NADH + H(+). The sequence is that of Acetaldehyde dehydrogenase (mhpF) from Pseudoalteromonas translucida (strain TAC 125).